The following is a 141-amino-acid chain: VLSAADKNNVKGIFGKISSHAEDYGAEALERMFITYPSTKTYFPHFDLSHGSAQVKGHGKKVVAALIEAANHIDDIAGTLSKLSDLHAHKLRVDPVNFKLLGQCFLVVVAIHHPSALTPEVHASLDKFLCAVGNVLTAKYR.

The Globin domain occupies 1-141; that stretch reads VLSAADKNNV…VGNVLTAKYR (141 aa). Residue His-58 coordinates O2. His-87 is a binding site for heme b.

Belongs to the globin family. Heterotetramer of two alpha chains and two beta chains. Red blood cells.

Functionally, involved in oxygen transport from the lung to the various peripheral tissues. This chain is Hemoglobin subunit alpha-A (HBAA), found in Francolinus pondicerianus (Grey francolin).